Reading from the N-terminus, the 336-residue chain is UPF0324 membrane protein spr0034 (336 aa).

8 helical membrane-spanning segments follow: residues 65–84, 91–113, 118–140, 153–175, 211–233, 249–271, 286–305, and 312–334; these read LLQYAVVLLGFGLNISQVFA, PVILSTISIALIIAYLFQRFFAL, ATLVGVGSSICGGSAIAATAPVI, VIFFFNVLAALIFPTLGTWLHLS, SATIVKLTRTLAIIPITLFLSYW, VFPLFILYFILASLLTTLLTSLG, FLIVMAMSAIGLKTNLVAMV, and ILLGAICWIAIILTTLGMQTLIG.

The protein belongs to the UPF0324 family.

It is found in the cell membrane. This Streptococcus pneumoniae (strain ATCC BAA-255 / R6) protein is UPF0324 membrane protein spr0034.